The sequence spans 486 residues: Ribosomal RNA small subunit methyltransferase F (486 aa).

Residues 124 to 130, E148, D175, and D193 each bind S-adenosyl-L-methionine; that span reads ASAPGSK. The Nucleophile role is filled by C246.

It belongs to the class I-like SAM-binding methyltransferase superfamily. RsmB/NOP family.

The protein localises to the cytoplasm. It carries out the reaction cytidine(1407) in 16S rRNA + S-adenosyl-L-methionine = 5-methylcytidine(1407) in 16S rRNA + S-adenosyl-L-homocysteine + H(+). Functionally, specifically methylates the cytosine at position 1407 (m5C1407) of 16S rRNA. In Shewanella baltica (strain OS185), this protein is Ribosomal RNA small subunit methyltransferase F.